The primary structure comprises 158 residues: Regulator of sigma D (158 aa).

This sequence belongs to the Rsd/AlgQ family. As to quaternary structure, interacts with RpoD.

The protein localises to the cytoplasm. In terms of biological role, binds RpoD and negatively regulates RpoD-mediated transcription activation by preventing the interaction between the primary sigma factor RpoD with the catalytic core of the RNA polymerase and with promoter DNA. May be involved in replacement of the RNA polymerase sigma subunit from RpoD to RpoS during the transition from exponential growth to the stationary phase. This chain is Regulator of sigma D, found in Escherichia coli (strain UTI89 / UPEC).